The primary structure comprises 682 residues: Potassium-transporting ATPase ATP-binding subunit (682 aa).

4 consecutive transmembrane segments (helical) span residues 34-54, 62-82, 219-239, and 254-274; these read PVMF…IAMA, ALFS…ANFA, IALT…TATL, and VLVA…LSAI. The active-site 4-aspartylphosphate intermediate is the Asp307. ATP-binding positions include Asp344, Glu348, 377–384, and Lys395; that span reads FTAQSRMS. Mg(2+)-binding residues include Asp518 and Asp522. 3 helical membrane passes run 588 to 608, 616 to 636, and 656 to 676; these read FAII…LNIM, AILS…PLAL, and IYGL…DLLL.

The protein belongs to the cation transport ATPase (P-type) (TC 3.A.3) family. Type IA subfamily. The system is composed of three essential subunits: KdpA, KdpB and KdpC.

The protein resides in the cell inner membrane. The enzyme catalyses K(+)(out) + ATP + H2O = K(+)(in) + ADP + phosphate + H(+). In terms of biological role, part of the high-affinity ATP-driven potassium transport (or Kdp) system, which catalyzes the hydrolysis of ATP coupled with the electrogenic transport of potassium into the cytoplasm. This subunit is responsible for energy coupling to the transport system and for the release of the potassium ions to the cytoplasm. This is Potassium-transporting ATPase ATP-binding subunit from Escherichia coli O9:H4 (strain HS).